A 396-amino-acid polypeptide reads, in one-letter code: Gap junction gamma-1 protein (396 aa).

Over M1–K22 the chain is Cytoplasmic. The helical transmembrane segment at I23–Y45 threads the bilayer. Over D46–R75 the chain is Extracellular. A helical transmembrane segment spans residues F76–A95. The Cytoplasmic segment spans residues I96–K175. Residues E145–R165 are disordered. Basic and acidic residues predominate over residues E147 to S156. A helical membrane pass occupies residues I176–L198. Residues Y199 to K228 are Extracellular-facing. The chain crosses the membrane as a helical span at residues T229 to W248. The Cytoplasmic segment spans residues E249–I396. A disordered region spans residues V353–I396. Residues A376–S387 show a composition bias toward polar residues.

Belongs to the connexin family. Gamma-type subfamily. As to quaternary structure, a connexon is composed of a hexamer of connexins. Interacts with CNST.

Its subcellular location is the cell membrane. The protein resides in the cell junction. The protein localises to the gap junction. One gap junction consists of a cluster of closely packed pairs of transmembrane channels, the connexons, through which materials of low MW diffuse from one cell to a neighboring cell. The protein is Gap junction gamma-1 protein (GJC1) of Homo sapiens (Human).